Here is a 526-residue protein sequence, read N- to C-terminus: Probable inorganic phosphate transporter 1-3 (526 aa).

Residues 1 to 21 (MADGQLKVLTTLDHARTQWYH) are Cytoplasmic-facing. Residues 22 to 42 (FMAIVIAGMGFFTDAYDLFCI) form a helical membrane-spanning segment. Over 43–70 (SLVSKLLGRIYYTDLAGDNPGSLPPNVS) the chain is Extracellular. The chain crosses the membrane as a helical span at residues 71–91 (AAVNGVALCGTLAGQLFFGWL). Residues 92–99 (GDKLGRKS) are Cytoplasmic-facing. The chain crosses the membrane as a helical span at residues 100-120 (VYGFTLVLMVVCSVASGLSFG). The Extracellular portion of the chain corresponds to 121-124 (RTAK). Residues 125–145 (GVVATLCFFRFWLGFGIGGDY) traverse the membrane as a helical segment. Over 146–163 (PLSATIMSEYANKRTRGA) the chain is Cytoplasmic. Residues 164 to 184 (FIAAVFAMQGFGILFGAIVAL) form a helical membrane-spanning segment. Over 185 to 211 (VVSAGFRNAYPAPSYADGRAASLVPEA) the chain is Extracellular. A helical transmembrane segment spans residues 212–232 (DYVWRIILMFGTVPAALTYYW). The Cytoplasmic portion of the chain corresponds to 233-294 (RMKMPETARY…GLFSRQFVRR (62 aa)). Residues 295–315 (HGVHLVATTSTWFLLDIAFYS) form a helical membrane-spanning segment. Over 316–349 (QNLFQKDIFSKVGWIPPARTMNAVEEVFRIARAQ) the chain is Extracellular. The helical transmembrane segment at 350-370 (ALIALCGTIPGYWFTVAFIDV) threads the bilayer. Over 371–373 (AGR) the chain is Cytoplasmic. The helical transmembrane segment at 374 to 394 (FAIQLMGFAMMTVFMLGLAAP) threads the bilayer. The Extracellular segment spans residues 395 to 407 (YHHWTTPGNHTGF). The helical transmembrane segment at 408-428 (VVMYGFTFFFANFGPNATTFI) threads the bilayer. The Cytoplasmic segment spans residues 429–444 (VPAEIYPARLRSTCHG). The chain crosses the membrane as a helical span at residues 445–465 (ISAAAGKAGAIVGAFGFLYAA). Over 466–483 (QDPHKPEAGYKPGIGIRN) the chain is Extracellular. The chain crosses the membrane as a helical span at residues 484-504 (ALFVLAGTNFLGMLMTLLVPE). At 505–526 (SKGMSLEEVSKENVADDEEATA) the chain is on the cytoplasmic side.

It belongs to the major facilitator superfamily. Phosphate:H(+) symporter (TC 2.A.1.9) family. In terms of tissue distribution, expressed at low levels in roots.

It localises to the membrane. High-affinity transporter for external inorganic phosphate. The sequence is that of Probable inorganic phosphate transporter 1-3 (PHT1-3) from Oryza sativa subsp. japonica (Rice).